Reading from the N-terminus, the 234-residue chain is MSTEIGHLRRRLVEFLIQSTTLLELPPIVKYSALSLFFDRFRPNLVRFLQKKKAEHWLLQPLNESNLQLFVLISIWISCKMHCTRGLSVHSLKSFGDKVITEQLFMVRDFLDAELVFLKVLKFEIGTLNIAYTRLEDLLIQFKEVAKVGEQLNFEACMDMMDLLYEKEDTSLLYQSSKSLAASILVSSYIITVPKQQYEFPILPWVKMVTNKEEREVVELVEYILAHVLYSNSP.

This sequence belongs to the cyclin family.

This is Cyclin-J18 (CYCJ18) from Arabidopsis thaliana (Mouse-ear cress).